We begin with the raw amino-acid sequence, 347 residues long: MNKELLDDILSLEDKAVSEIENASSLQDLEKVRLSYLGKKGVIKAYFDNLKEIEDAGKKRNLGEVINVLRNKLDQLIMNKENILKAEEVNFKLQNEAVDITLPARPEKIGKVHPLSKVINEVKLIFAHMGFKAVDGPDIEDEFHVFDALNTPSHHPAREEQDTFYLKNKRNDKRMVLRTHTSSVQIRTMEKTKKFPIKIVAPGRVYRNDFDATHTPMFHQIEGLYVDENVNMGQLKFTIHHFLNKFFGDKGLKIRFRNSFFPFTEPSAEVDISYKGSKWIEVLGCGMVHPNVFQNVGIDHTKYNGFAFGIGIERLAMLKYQISDLRSFYDNKISWLDHYGFHFSSLR.

Residue glutamate 265 participates in Mg(2+) binding.

This sequence belongs to the class-II aminoacyl-tRNA synthetase family. Phe-tRNA synthetase alpha subunit type 1 subfamily. In terms of assembly, tetramer of two alpha and two beta subunits. Mg(2+) serves as cofactor.

Its subcellular location is the cytoplasm. It catalyses the reaction tRNA(Phe) + L-phenylalanine + ATP = L-phenylalanyl-tRNA(Phe) + AMP + diphosphate + H(+). In Wolbachia sp. subsp. Drosophila simulans (strain wRi), this protein is Phenylalanine--tRNA ligase alpha subunit.